The chain runs to 218 residues: Protein GrpE (218 aa).

The interval 1–78 (MSEFNKDDYL…DSADTLTPLG (78 aa)) is disordered. Residues 14 to 58 (PDPSDAEAAAQASSGADASAESGSAQDSAAQAPSNEGADAAPAAA) are compositionally biased toward low complexity.

Belongs to the GrpE family. Homodimer.

It localises to the cytoplasm. Functionally, participates actively in the response to hyperosmotic and heat shock by preventing the aggregation of stress-denatured proteins, in association with DnaK and GrpE. It is the nucleotide exchange factor for DnaK and may function as a thermosensor. Unfolded proteins bind initially to DnaJ; upon interaction with the DnaJ-bound protein, DnaK hydrolyzes its bound ATP, resulting in the formation of a stable complex. GrpE releases ADP from DnaK; ATP binding to DnaK triggers the release of the substrate protein, thus completing the reaction cycle. Several rounds of ATP-dependent interactions between DnaJ, DnaK and GrpE are required for fully efficient folding. This chain is Protein GrpE, found in Bifidobacterium longum (strain NCC 2705).